The sequence spans 541 residues: Coiled-coil domain-containing protein 116 (541 aa).

Residues 79-102 (QVLDSLQTVVEQATERLAAMKTEA) are a coiled coil. Positions 346–397 (LPGNSDLLQPSSKASIPTNREARGEPCDSLTTAYSPKTSHRKSKGRRGSPPN) are disordered. Positions 351–363 (DLLQPSSKASIPT) are enriched in polar residues. Over residues 383 to 392 (TSHRKSKGRR) the composition is skewed to basic residues. Ser-394 carries the phosphoserine modification.

The protein localises to the cytoplasm. It is found in the cytoskeleton. It localises to the microtubule organizing center. The protein resides in the centrosome. The sequence is that of Coiled-coil domain-containing protein 116 (Ccdc116) from Mus musculus (Mouse).